The following is a 71-amino-acid chain: cAMP-dependent protein kinase inhibitor beta (71 aa).

Positions 1–21 are disordered; sequence MTDVESVISSFASSARAGRRN. Threonine 2 is modified (blocked amino end (Thr)). Serine 35 carries the post-translational modification Phosphoserine. Residues 51-71 form a disordered region; that stretch reads AKMKNEEKDQGQPKKPLDEDK.

Belongs to the PKI family. In terms of tissue distribution, testis.

Functionally, extremely potent competitive inhibitor of cAMP-dependent protein kinase activity, this protein interacts with the catalytic subunit of the enzyme after the cAMP-induced dissociation of its regulatory chains. This is cAMP-dependent protein kinase inhibitor beta (Pkib) from Rattus norvegicus (Rat).